Consider the following 325-residue polypeptide: 33 kDa chaperonin (325 aa).

2 disulfide bridges follow: Cys260/Cys262 and Cys293/Cys296.

The protein belongs to the HSP33 family. Post-translationally, under oxidizing conditions two disulfide bonds are formed involving the reactive cysteines. Under reducing conditions zinc is bound to the reactive cysteines and the protein is inactive.

The protein resides in the cytoplasm. Redox regulated molecular chaperone. Protects both thermally unfolding and oxidatively damaged proteins from irreversible aggregation. Plays an important role in the bacterial defense system toward oxidative stress. This Aquifex aeolicus (strain VF5) protein is 33 kDa chaperonin.